An 818-amino-acid chain; its full sequence is Hillarin (818 aa).

The region spanning 9–76 is the LIM zinc-binding domain; that stretch reads STCLRCSETV…SSHVPKSGPG (68 aa). Residues 97-141 are disordered; the sequence is FVNEQIRGTRSEVDGGPLGGSRQSTPNGYGSREISSPSQNDSDYK. The segment covering 117–137 has biased composition (polar residues); it reads SRQSTPNGYGSREISSPSQND. Residues 216–272 are a coiled coil; the sequence is QDEWERELQRLTHKFEKELATSRRSRDEANILTMRHEQQKEDLEKNMTLRRSKKKES.

It belongs to the transglutaminase-like superfamily. As to quaternary structure, interacts with pnut. In terms of tissue distribution, localizes to the neuropil of the embryonic central nervous system (at protein level). Also detected in third instar larval brain (at protein level).

The protein resides in the cytoplasm. Its subcellular location is the cell cortex. It localises to the cleavage furrow. Its function is as follows. May act as a modulator of septin function during cytokinesis in the developing nervous system. The protein is Hillarin of Drosophila melanogaster (Fruit fly).